The following is a 282-amino-acid chain: ATP synthase gamma chain (282 aa).

The protein belongs to the ATPase gamma chain family. As to quaternary structure, F-type ATPases have 2 components, CF(1) - the catalytic core - and CF(0) - the membrane proton channel. CF(1) has five subunits: alpha(3), beta(3), gamma(1), delta(1), epsilon(1). CF(0) has three main subunits: a, b and c.

It is found in the cell membrane. Its function is as follows. Produces ATP from ADP in the presence of a proton gradient across the membrane. The gamma chain is believed to be important in regulating ATPase activity and the flow of protons through the CF(0) complex. This chain is ATP synthase gamma chain, found in Clostridium botulinum (strain Langeland / NCTC 10281 / Type F).